Reading from the N-terminus, the 288-residue chain is Pyridoxal kinase PdxY (288 aa).

Substrate-binding positions include Ser-12 and 47-48 (TQ). ATP-binding positions include Asp-114, Glu-151, Lys-184, and 211 to 214 (RPLL). Residue Asp-225 coordinates substrate.

The protein belongs to the pyridoxine kinase family. PdxY subfamily. As to quaternary structure, homodimer. Requires Mg(2+) as cofactor.

The catalysed reaction is pyridoxal + ATP = pyridoxal 5'-phosphate + ADP + H(+). It functions in the pathway cofactor metabolism; pyridoxal 5'-phosphate salvage; pyridoxal 5'-phosphate from pyridoxal: step 1/1. In terms of biological role, pyridoxal kinase involved in the salvage pathway of pyridoxal 5'-phosphate (PLP). Catalyzes the phosphorylation of pyridoxal to PLP. In Pseudomonas aeruginosa (strain UCBPP-PA14), this protein is Pyridoxal kinase PdxY.